A 175-amino-acid chain; its full sequence is MSFNNVSPGKDIPNDFNVIIEIPAQSDPVKYEADKETGLLHVDRFVGTGMRYPANYGFIPQTLAGDGDPVDVLVVTPFPLVHGCVVRCRTLGMLKMTDESGQDAKLVAVPVNKLSPATAHMTDLSDIGQNLLDQIKHFFEQYKALEPGKWVKVEGWGGIEEAHKEIVDGVANYKK.

Substrate is bound by residues Lys30, Arg44, and Tyr56. The Mg(2+) site is built by Asp66, Asp71, and Asp103. Tyr142 is a binding site for substrate.

Belongs to the PPase family. As to quaternary structure, homohexamer. It depends on Mg(2+) as a cofactor.

Its subcellular location is the cytoplasm. The catalysed reaction is diphosphate + H2O = 2 phosphate + H(+). Catalyzes the hydrolysis of inorganic pyrophosphate (PPi) forming two phosphate ions. The chain is Inorganic pyrophosphatase from Ralstonia nicotianae (strain ATCC BAA-1114 / GMI1000) (Ralstonia solanacearum).